Consider the following 281-residue polypeptide: Ribose-phosphate pyrophosphokinase (281 aa).

ATP is bound by residues 33-35 (DGE) and 90-91 (RQ). Residues His-123 and Asp-161 each coordinate Mg(2+). The active site involves Lys-185. D-ribose 5-phosphate is bound by residues Arg-187 and Asp-211.

It belongs to the ribose-phosphate pyrophosphokinase family. Class III (archaeal) subfamily. The cofactor is Mg(2+).

It is found in the cytoplasm. It carries out the reaction D-ribose 5-phosphate + ATP = 5-phospho-alpha-D-ribose 1-diphosphate + AMP + H(+). Its pathway is metabolic intermediate biosynthesis; 5-phospho-alpha-D-ribose 1-diphosphate biosynthesis; 5-phospho-alpha-D-ribose 1-diphosphate from D-ribose 5-phosphate (route I): step 1/1. Involved in the biosynthesis of the central metabolite phospho-alpha-D-ribosyl-1-pyrophosphate (PRPP) via the transfer of pyrophosphoryl group from ATP to 1-hydroxyl of ribose-5-phosphate (Rib-5-P). This is Ribose-phosphate pyrophosphokinase from Halobacterium salinarum (strain ATCC 29341 / DSM 671 / R1).